Reading from the N-terminus, the 434-residue chain is Quinolone resistance transporter (434 aa).

The next 12 membrane-spanning stretches (helical) occupy residues 15-35 (LIPA…AVGF), 45-65 (GIGD…YFLF), 85-105 (ILLT…PKSF), 110-130 (FLLG…ITQW), 142-162 (MFVL…GLLL), 175-195 (WLFV…FLWL), 241-261 (VLLL…LNLW), 275-295 (IQIG…LLII), 306-326 (YGHL…SGWL), 333-353 (LAAL…FWTL), 367-387 (IALI…GIGL), and 396-416 (AAGL…TYIV).

This sequence belongs to the major facilitator superfamily.

The protein localises to the cell inner membrane. In terms of biological role, efflux pump that mediates resistance to quinolone-type antibiotics. The polypeptide is Quinolone resistance transporter (Acinetobacter baumannii).